The following is a 477-amino-acid chain: Leukotoxin export protein LtxD (477 aa).

The chain crosses the membrane as a helical span at residues 64–84 (IMLFLTLAIIVSIFSNVEIIA). Residues 206–287 (LNLNKKEAEK…ENEVLLAKEE (82 aa)) adopt a coiled-coil conformation.

The protein belongs to the membrane fusion protein (MFP) (TC 8.A.1) family. In terms of assembly, probably part of a complex composed of LtxB, LtxD and TdeA, which forms a single transport channel across the two membranes.

Its subcellular location is the cell inner membrane. Involved in the export of the LtxA leukotoxin. The sequence is that of Leukotoxin export protein LtxD from Aggregatibacter actinomycetemcomitans (Actinobacillus actinomycetemcomitans).